The chain runs to 1067 residues: Isoleucine--tRNA ligase (1067 aa).

Positions 49–59 (PYVSGAIHLGT) match the 'HIGH' region motif. The short motif at 625-629 (KMSKS) is the 'KMSKS' region element. Lysine 628 provides a ligand contact to ATP.

Belongs to the class-I aminoacyl-tRNA synthetase family. IleS type 2 subfamily. As to quaternary structure, monomer. Zn(2+) serves as cofactor.

It localises to the cytoplasm. It carries out the reaction tRNA(Ile) + L-isoleucine + ATP = L-isoleucyl-tRNA(Ile) + AMP + diphosphate. Its function is as follows. Catalyzes the attachment of isoleucine to tRNA(Ile). As IleRS can inadvertently accommodate and process structurally similar amino acids such as valine, to avoid such errors it has two additional distinct tRNA(Ile)-dependent editing activities. One activity is designated as 'pretransfer' editing and involves the hydrolysis of activated Val-AMP. The other activity is designated 'posttransfer' editing and involves deacylation of mischarged Val-tRNA(Ile). The protein is Isoleucine--tRNA ligase of Pyrococcus abyssi (strain GE5 / Orsay).